The chain runs to 87 residues: Type 3 secretion system needle filament protein (87 aa).

Belongs to the SctF family. In terms of assembly, the core secretion machinery of the T3SS is composed of approximately 20 different proteins, including cytoplasmic components, a base, an export apparatus and a needle. This subunit polymerizes and forms the helical needle filament. In Y.enterocolitica E40, the needles are composed of 139 (plus-minus 19) YscF/SctF subunits.

Its subcellular location is the secreted. The protein localises to the cell surface. With respect to regulation, the secretion and/or polymerization may be controlled by the type III secretion system regulator YopR. Its function is as follows. Component of the type III secretion system (T3SS), also called injectisome, which is used to inject bacterial effector proteins into eukaryotic host cells. YscF/SctF forms the external needle filament that protrudes from the bacterial surface. The needle is not sufficient by itself for the formation of a pore allowing translocation of the Yop effectors across the host cell membrane. The chain is Type 3 secretion system needle filament protein from Yersinia enterocolitica.